Here is a 750-residue protein sequence, read N- to C-terminus: MIIRSPEPEVKILVDRDPIKTSFEEWAKPGHFSRTIAKGPDTTTWIWNLHADAHDFDSHTSDLEEISRKVFSAHFGQLSIIFLWLSGMYFHGARFSNYEAWLSDPTHIGPSAQVVWPIVGQEILNGDVGGGFRGIQITSGFFQLWRASGITSELQLYCTAIGALVFSALMLFAGWFHYHKAAPKLAWFQDVESMLNHHLAGLLGLGSLSWAGHQVHVSLPINQFLNAGVDPKEIPLPHEFILNRDLLAQLYPSFAEGATPFFTLNWSKYSEFLTFRGGLDPVTGGLWLTDIAHHHLAIAILFLIAGHMYRTNWGIGHGIKDILEAHKGPFTGQGHKGLYEILTTSWHAQLSLNLAMLGSLTIVVAHHMYSMPPYPYLATDYATQLSLFTHHMWIGGFLIVGAAAHAAIFMVRDYDPTNRYNDLLDRVLRHRDAIISHLNWVCIFLGFHSFGLYIHNDTMSALGRPQDMFSDTAIQLQPVFAQWIQNTHALAPGVTAPGETASTSLTWGGGELVAVGGKVALLPIPLGTADFLVHHIHAFTIHVTVLILLKGVLFARSSRLIPDKANLGFRFPCDGPGRGGTCQVSAWDHVFLGLFWMYNAISVVIFHFSWKMQSDVWGSISDQGVVTHITGGNFAQSSITINGWLRDFLWAQASQVIQSYGSSLSAYGLFFLGAHFVWAFSLMFLFSGRGYWQELIESIVWAHNKLKVAPATQPRALSIVQGRAVGVTHYLLGGIATTWAFFLARIIAVG.

8 helical membrane passes run 70 to 93 (VFSAHFGQLSIIFLWLSGMYFHGA), 156 to 179 (LYCTAIGALVFSALMLFAGWFHYH), 195 to 219 (LNHHLAGLLGLGSLSWAGHQVHVSL), 291 to 309 (IAHHHLAIAILFLIAGHMY), 346 to 369 (WHAQLSLNLAMLGSLTIVVAHHMY), 385 to 411 (LSLFTHHMWIGGFLIVGAAAHAAIFMV), 433 to 455 (AIISHLNWVCIFLGFHSFGLYIH), and 531 to 549 (FLVHHIHAFTIHVTVLILL). [4Fe-4S] cluster contacts are provided by C573 and C582. A run of 2 helical transmembrane segments spans residues 589-610 (HVFLGLFWMYNAISVVIFHFSW) and 664-686 (LSAYGLFFLGAHFVWAFSLMFLF). H675 is a chlorophyll a' binding site. The chlorophyll a site is built by M683 and Y691. Phylloquinone is bound at residue W692. The helical transmembrane segment at 724-744 (AVGVTHYLLGGIATTWAFFLA) threads the bilayer.

The protein belongs to the PsaA/PsaB family. As to quaternary structure, the PsaA/B heterodimer binds the P700 chlorophyll special pair and subsequent electron acceptors. PSI consists of a core antenna complex that captures photons, and an electron transfer chain that converts photonic excitation into a charge separation. The eukaryotic PSI reaction center is composed of at least 11 subunits. P700 is a chlorophyll a/chlorophyll a' dimer, A0 is one or more chlorophyll a, A1 is one or both phylloquinones and FX is a shared 4Fe-4S iron-sulfur center. serves as cofactor.

It is found in the plastid. Its subcellular location is the chloroplast thylakoid membrane. It catalyses the reaction reduced [plastocyanin] + hnu + oxidized [2Fe-2S]-[ferredoxin] = oxidized [plastocyanin] + reduced [2Fe-2S]-[ferredoxin]. PsaA and PsaB bind P700, the primary electron donor of photosystem I (PSI), as well as the electron acceptors A0, A1 and FX. PSI is a plastocyanin-ferredoxin oxidoreductase, converting photonic excitation into a charge separation, which transfers an electron from the donor P700 chlorophyll pair to the spectroscopically characterized acceptors A0, A1, FX, FA and FB in turn. Oxidized P700 is reduced on the lumenal side of the thylakoid membrane by plastocyanin. The polypeptide is Photosystem I P700 chlorophyll a apoprotein A1 (Lepidium virginicum (Virginia pepperweed)).